The sequence spans 605 residues: Glucose oxidase (605 aa).

An N-terminal signal peptide occupies residues 1 to 16 (MQTLLVSSLVVSLAAA). FAD is bound by residues Leu-51 and Thr-52. N-linked (GlcNAc...) asparagine glycosylation occurs at Asn-65. Position 72 (Glu-72) interacts with FAD. A glycan (N-linked (GlcNAc...) asparagine) is linked at Asn-111. Positions 125, 129, 130, and 132 each coordinate FAD. N-linked (GlcNAc...) asparagine glycans are attached at residues Asn-183 and Asn-190. A disulfide bond links Cys-186 and Cys-228. Val-272 serves as a coordination point for FAD. 4 N-linked (GlcNAc...) asparagine glycosylation sites follow: Asn-280, Asn-377, Asn-410, and Asn-495. His-538 (proton acceptor) is an active-site residue. O2-binding residues include Arg-559 and Val-560. Positions 571 and 583 each coordinate FAD.

Belongs to the GMC oxidoreductase family. In terms of assembly, homodimer. It depends on FAD as a cofactor. Post-translationally, the N-linked sugar chains of the glucose oxidase contributed to the high solubility of the enzyme in water.

Its subcellular location is the secreted. It localises to the cell wall. It is found in the cytoplasm. The protein localises to the extracellular space. The protein resides in the extracellular matrix. The catalysed reaction is beta-D-glucose + O2 = D-glucono-1,5-lactone + H2O2. Functionally, glucose oxidase catalyzes the oxidation of beta-D-glucose to D-glucono-delta-lactone and hydrogen peroxide in the presence of molecular oxygen. D-glucono-delta-lactone is sequentially hydrolyzed by lactonase to D-gluconic acid, and the resulting hydrogen peroxide is hydrolyzed by catalase to oxygen and water. The activity shows high specificity to beta-D-glucose, with very low to no activity towards L-glucose, 2-deoxy-D-glucose, 3-deoxy-D-glucose, 4-deoxy-D-glucose, 5-deoxy-D-glucose, 6-deoxy-D-glucose, 3-O-methyl-D-glucose, 4-O-methyl-D-glucose, 6-O-methyl-D-glucose, 4,6-O-benzylidene-D-glucose, 5-thio-5-deoxy-D-glucose, D-mannose, D-allose, D-galactose, D-fructose, D-arabinose, D-xylose, trehalose, melibiose, L-mannomethylose, lactose, sucrose or 1,5-anhydro-D-glucitol. The sequence is that of Glucose oxidase from Aspergillus niger.